The chain runs to 1019 residues: Insulin-degrading enzyme (1019 aa).

Residue His108 coordinates Zn(2+). Glu111 (proton acceptor) is an active-site residue. His112 and Glu189 together coordinate Zn(2+). N6-succinyllysine is present on Lys192. 359–363 (LVGGQ) contributes to the substrate binding site. Arg429 serves as a coordination point for ATP. Lys697 is modified (N6-succinyllysine). Positions 853–858 (EKPPHY) match the SlyX motif motif. 895 to 901 (DKPKKLS) provides a ligand contact to ATP.

This sequence belongs to the peptidase M16 family. Homodimer. Can also form homotetramers. Zn(2+) serves as cofactor.

It is found in the cytoplasm. The protein resides in the cytosol. The protein localises to the cell membrane. It localises to the secreted. The catalysed reaction is Degradation of insulin, glucagon and other polypeptides. No action on proteins.. Activated by ATP, other nucleotide triphosphates and small peptides. Inhibited by bacitracin. In terms of biological role, plays a role in the cellular breakdown of insulin, APP peptides, IAPP peptides, natriuretic peptides, glucagon, bradykinin, kallidin, and other peptides, and thereby plays a role in intercellular peptide signaling. Substrate binding induces important conformation changes, making it possible to bind and degrade larger substrates, such as insulin. Contributes to the regulation of peptide hormone signaling cascades and regulation of blood glucose homeostasis via its role in the degradation of insulin, glucagon and IAPP. Plays a role in the degradation and clearance of APP-derived amyloidogenic peptides that are secreted by neurons and microglia. Degrades the natriuretic peptides ANP, BNP and CNP, inactivating their ability to raise intracellular cGMP. Also degrades an aberrant frameshifted 40-residue form of NPPA (fsNPPA) which is associated with familial atrial fibrillation in heterozygous patients. Involved in antigen processing. Produces both the N terminus and the C terminus of MAGEA3-derived antigenic peptide (EVDPIGHLY) that is presented to cytotoxic T lymphocytes by MHC class I. The polypeptide is Insulin-degrading enzyme (IDE) (Bos taurus (Bovine)).